A 72-amino-acid polypeptide reads, in one-letter code: uncharacterized protein (72 aa).

The chain crosses the membrane as a helical span at residues 33–53; the sequence is VCIFFSLIFFFFFFFFCVNWG.

The protein localises to the membrane. This is an uncharacterized protein from Dictyostelium discoideum (Social amoeba).